Reading from the N-terminus, the 1358-residue chain is MIEPSEDSFETMMEHKNPSSKQMESSEGSSNTTEATSGSGVRGEAGPASGPAQEKKEPPSGPLQEMEELPTDLLQDMEEPSSGPRKEIEDPPNDLLQDLEESCNGSHQARGDPLSGASDRMKEASVNPSGAREEQEAHTDLKESGREETPQEQNQTEHSTAELMAMVRSIISLYFRMQDLKEQQRVAEEILIKGINAGQLPAPKHFSGDRREFHEFIVLCQLTLQSYPRMFYNDRLRVGYVINHLSGLALEWAKALLQENSPLIGDFPAFLEAMSEVFEYRQALRVAEEAMFTIRQGGRSATEYIDEFQSLVPILGWPDEVLQAHLCQGLNEEIRHYLFRVPQPDSLDSLIVLILQIEEKLAERRAMLRLPPEARPRNLTWIDSPAPERWMVSSWLPSEVHPDINRAHLFLLLMVRVNPYHSVAVQALVDSGADGNFMDEKFAQEHYVELYEKPYPQPVQSVDGSLIGNEPVWLYTEPLVCIHQNHQESIEFDIVPSPNFSVVLGIRWLRVHAPEVDWIKGRCTFHSPYCLKNCFRPPPPCIALERHGMSLLPGLPHPYSDLADVFNPKEADDETSDQPSSDGSDDLSESEPSELQQAGDSDHSETFYECPSTAPWEPVGARMQERARLQEEYWDLQDMLTNRQDYIQMIPELFDQLHGAEWFTKLELRGTIVEESVNGHRTEDVWKAAFGLELEEMKSYQPFALSPDPIIPQNVIHFILKDMLGFFVLSYGQEVLIYSMSQEEHLHHVRQVLVRFRHHNVYCSLDKSQFHRQTVEFLGFVVTPKGVKLNKNVMTIITGYPTPGSKLSLRNFIEFVFPYRHFVERFSIIAEPLVRQLLSSYQFYWGVEEQEAFECLKRAFRKAPLLHHPKPQNPFYLETGVTGTALHASLIQIDDQTGKRACCAFYSRNISPIEVEYSQAEMKILPIRAAFMVWCRYLENTEEPIMILLNTEDLASLNNDRLTVLLPGHWVFFFSHFNFDVMELPEQDGGRALPPVRNLRWRRAFQRNTAARQTLLLASRGFPRDPSTESGEEENEEQDELNEQILRQELLAMIPIDQILNSFLAHFSMAQIRAVILHFFRGLLYWKNTLALAAILVLLRVRQCLSLRPAPAMRVARPQPQRSLRLILDSSLIAGSSITTAITQLLTQMPALVGANTIPAQELAELFLGPGRWQRNALHSQAHRGLQFTPGFWLTLCEFFGVRVTPQEGHLPALRQNRYLELHVVGDEDVVLREALQDDLQRYRQCGLHDGLQDTSQDKQDNDVQEAPPSHTAATHPPRPRHLMDPQVLEFLGSRLLHIHSADGQLHLLSREQAARALSQFLTLIYRRALPIPAWESQPREQARLEELPDEDEDANLD.

2 disordered regions span residues 1–159 (MIEP…TEHS) and 563–616 (ADVF…TAPW). The span at 19 to 30 (SSKQMESSEGSS) shows a compositional bias: low complexity. Acidic residues predominate over residues 65–79 (EMEELPTDLLQDMEE). A compositionally biased stretch (basic and acidic residues) spans 131-149 (AREEQEAHTDLKESGREET). The segment covering 583 to 592 (GSDDLSESEP) has biased composition (acidic residues). A run of 2 helical transmembrane segments spans residues 1083 to 1099 (LLYW…LVLL) and 1126 to 1146 (LILD…TQLL). Disordered stretches follow at residues 1250–1283 (DGLQ…PRHL) and 1338–1358 (QPRE…ANLD). The span at 1267–1276 (APPSHTAATH) shows a compositional bias: low complexity. The segment covering 1338–1347 (QPREQARLEE) has biased composition (basic and acidic residues). The segment covering 1348–1358 (LPDEDEDANLD) has biased composition (acidic residues).

Its subcellular location is the membrane. Functionally, plays an essential role in capillaries endothelial cells for the maintenance of feto-maternal interface and for development of the placenta. This Homo sapiens (Human) protein is Retrotransposon-like protein 1 (RTL1).